Reading from the N-terminus, the 292-residue chain is NIF3-like protein 1 (292 aa).

The protein belongs to the GTP cyclohydrolase I type 2/NIF3 family.

This Drosophila melanogaster (Fruit fly) protein is NIF3-like protein 1 (anon-35F/36A).